A 1314-amino-acid polypeptide reads, in one-letter code: SWI/SNF chromatin-remodeling complex subunit SWI1 (1314 aa).

3 stretches are compositionally biased toward low complexity: residues 1 to 65 (MDFF…NTNT), 88 to 112 (SNNNNSNSNNNDNNNSNTVASSTNF), and 213 to 235 (ISQNSSSSTPNTNSNSTPNANQQ). Disordered regions lie at residues 1–112 (MDFF…STNF), 213–250 (ISQNSSSSTPNTNSNSTPNANQQFLPFNNSASNNGNLT), 262–321 (NSMD…STSN), and 355–384 (QNQQQQNQQPQQQQQQQQNPKFLQSQRQQQ). Positions 1-323 (MDFFNLNNNN…NTNNSTSNAN (323 aa)) are prion domain (PrD). Positions 236–250 (FLPFNNSASNNGNLT) are enriched in polar residues. Positions 406–493 (NKQYELFMKS…ILLPYERHMI (88 aa)) constitute an ARID domain. The segment covering 581–592 (NVNNNNIGQQQV) has biased composition (low complexity). Residues 581–617 (NVNNNNIGQQQVKKPRKQRVKKKTKKELELERKERED) form a disordered region. The span at 593–605 (KKPRKQRVKKKTK) shows a compositional bias: basic residues. The segment covering 606–617 (KELELERKERED) has biased composition (basic and acidic residues). Residues 1241–1258 (CVQLIKCLVEKSICFENC) form a C4-type zinc finger.

The protein belongs to the SWI1 family. In terms of assembly, component of the SWI/SNF global transcription activator complex. The 1.14 MDa SWI/SNF complex is composed of 11 different subunits: one copy each of SWI1, SNF2/SWI2, SNF5, SNF12/SWP73, ARP7/SWP61, ARP9/SWP59; two copies each of SWI3, SNF6, SNF11, SWP82; and three copies of TAF14/SWP29.

Its subcellular location is the nucleus. Functionally, involved in transcriptional activation. Component of the SWI/SNF complex, an ATP-dependent chromatin remodeling complex, which is required for the positive and negative regulation of gene expression of a large number of genes. It changes chromatin structure by altering DNA-histone contacts within a nucleosome, leading eventually to a change in nucleosome position, thus facilitating or repressing binding of gene-specific transcription factors. The protein is SWI/SNF chromatin-remodeling complex subunit SWI1 (SWI1) of Saccharomyces cerevisiae (strain ATCC 204508 / S288c) (Baker's yeast).